We begin with the raw amino-acid sequence, 346 residues long: Dihydroorotase (346 aa).

Residues His-14 and His-16 each contribute to the Zn(2+) site. Substrate is bound by residues 16-18 and Asn-42; that span reads HLR. Lys-100, His-137, and His-175 together coordinate Zn(2+). N6-carboxylysine is present on Lys-100. A substrate-binding site is contributed by His-137. Leu-220 serves as a coordination point for substrate. Zn(2+) is bound at residue Asp-248. Asp-248 is an active-site residue. Residues His-252 and Ala-264 each coordinate substrate.

The protein belongs to the metallo-dependent hydrolases superfamily. DHOase family. Class II DHOase subfamily. In terms of assembly, homodimer. Zn(2+) serves as cofactor.

The enzyme catalyses (S)-dihydroorotate + H2O = N-carbamoyl-L-aspartate + H(+). It participates in pyrimidine metabolism; UMP biosynthesis via de novo pathway; (S)-dihydroorotate from bicarbonate: step 3/3. Its function is as follows. Catalyzes the reversible cyclization of carbamoyl aspartate to dihydroorotate. In Cereibacter sphaeroides (strain ATCC 17025 / ATH 2.4.3) (Rhodobacter sphaeroides), this protein is Dihydroorotase.